The sequence spans 364 residues: Molybdenum import ATP-binding protein ModC (364 aa).

One can recognise an ABC transporter domain in the interval 1 to 229; the sequence is MLLIDIKKQL…PLMRPWLNAS (229 aa). Position 31–38 (31–38) interacts with ATP; sequence GRSGAGKS. In terms of domain architecture, Mop spans 293 to 360; sequence HSSIRNILPV…IKGVSVTQSD (68 aa).

Belongs to the ABC transporter superfamily. Molybdate importer (TC 3.A.1.8) family. The complex is composed of two ATP-binding proteins (ModC), two transmembrane proteins (ModB) and a solute-binding protein (ModA).

It is found in the cell inner membrane. It catalyses the reaction molybdate(out) + ATP + H2O = molybdate(in) + ADP + phosphate + H(+). Part of the ABC transporter complex ModABC involved in molybdenum import. Responsible for energy coupling to the transport system. The protein is Molybdenum import ATP-binding protein ModC of Aliivibrio fischeri (strain ATCC 700601 / ES114) (Vibrio fischeri).